The primary structure comprises 247 residues: Sugar fermentation stimulation protein homolog (247 aa).

The protein belongs to the SfsA family.

The polypeptide is Sugar fermentation stimulation protein homolog (Methanococcoides burtonii (strain DSM 6242 / NBRC 107633 / OCM 468 / ACE-M)).